A 429-amino-acid chain; its full sequence is O-methyltransferase phnC (429 aa).

An S-adenosyl-L-methionine-binding site is contributed by aspartate 285.

Belongs to the class I-like SAM-binding methyltransferase superfamily. Cation-independent O-methyltransferase family. COMT subfamily.

The catalysed reaction is (2'R)-atrovenetin + S-adenosyl-L-methionine = deoxyherqueinone + S-adenosyl-L-homocysteine + H(+). It functions in the pathway secondary metabolite biosynthesis. In terms of biological role, O-methyltransferase; part of the gene cluster that mediates the biosynthesis of phenalenones such as herqueinone, compounds that have been reported to treat tumors, bacterial infections and/or mycoses, and rheumatic diseases. The non-reducing polyketide synthase phnA synthesizes the heptaketide backbone and cyclizes it into the angular, hemiketal-containing naphtho-gamma-pyrone prephenalenone. The product template (PT) domain of phnA catalyzes only the C4-C9 aldol condensation, which is unprecedented among known PT domains. The transformation of prephenalenone to phenalenones requires an FAD-dependent monooxygenase phnB, which catalyzes the C2 aromatic hydroxylation of prephenalenone and ring opening of the gamma-pyrone ring simultaneously. Subsequent intramolecular deprotonation of C3 phenolic oxygen accelerates phenalenone ring closure to yield the tricyclic phenalenone core with a C2 hydroxylation. The prenyltransferase phnF further catalyzes reverse C-prenylation of phenalenone by direct electrophilic substitution at C6, or possibly via first a forward O-prenylation of a neighboring phenol in phenalenone, followed by a Claisen rearrangement. The hydroalkoxylation enzyme phnH catalyzes the 5-exo-trig cyclization via acid catalysis after the spontaneous deprotonation of 7-OH, which leads to the formation of the dihydrobenzofuran atrovenetin. Atrovenetin is further converted to deoxyherqueinone by the O-methyltransferase phnC which can methylate C2-OH to stabilize the northern portion of the phenalenone core. Finally, the oxidoreductase phnG converts deoxyherqueinone to herqueinone via C6 hydroxylation. The chain is O-methyltransferase phnC from Penicillium herquei.